We begin with the raw amino-acid sequence, 107 residues long: Small ribosomal subunit protein eS25 (107 aa).

The disordered stretch occupies residues 1–35 (MPPKQQLSKAAKAAAAMAGGKKSKKKWSKKSHKDK). Residues 8–20 (SKAAKAAAAMAGG) are compositionally biased toward low complexity. Residues 21–35 (KKSKKKWSKKSHKDK) are compositionally biased toward basic residues.

The protein belongs to the eukaryotic ribosomal protein eS25 family.

The chain is Small ribosomal subunit protein eS25 (RPS25) from Candida glabrata (strain ATCC 2001 / BCRC 20586 / JCM 3761 / NBRC 0622 / NRRL Y-65 / CBS 138) (Yeast).